The sequence spans 344 residues: L-rhamnose-proton symporter (344 aa).

10 consecutive transmembrane segments (helical) span residues 4-24 (AITM…CFYA), 38-58 (WSVG…ALLL), 68-88 (FSLS…IGNI), 101-121 (MGIG…TPII), 137-157 (TLLG…AGQL), 175-195 (LVLA…MNAA), 214-234 (LPSY…FCFI), 259-279 (VLLS…YAWG), 290-310 (ISWM…GLVL), and 323-343 (VLSL…IGMA).

The protein belongs to the L-rhamnose transporter (TC 2.A.7.6) family.

Its subcellular location is the cell inner membrane. The catalysed reaction is L-rhamnopyranose(in) + H(+)(in) = L-rhamnopyranose(out) + H(+)(out). Uptake of L-rhamnose across the cytoplasmic membrane with the concomitant transport of protons into the cell (symport system). This chain is L-rhamnose-proton symporter, found in Shigella flexneri.